Here is a 269-residue protein sequence, read N- to C-terminus: Tryptophan synthase alpha chain (269 aa).

Catalysis depends on proton acceptor residues glutamate 49 and aspartate 60.

This sequence belongs to the TrpA family. As to quaternary structure, tetramer of two alpha and two beta chains.

It carries out the reaction (1S,2R)-1-C-(indol-3-yl)glycerol 3-phosphate + L-serine = D-glyceraldehyde 3-phosphate + L-tryptophan + H2O. The protein operates within amino-acid biosynthesis; L-tryptophan biosynthesis; L-tryptophan from chorismate: step 5/5. In terms of biological role, the alpha subunit is responsible for the aldol cleavage of indoleglycerol phosphate to indole and glyceraldehyde 3-phosphate. This Pseudomonas putida (strain W619) protein is Tryptophan synthase alpha chain.